A 626-amino-acid chain; its full sequence is L-amino-acid oxidase 4 (626 aa).

Positions 1–18 are cleaved as a signal peptide; sequence KSFFRSLVAASLVIVSYS. An N-linked (GlcNAc...) asparagine glycan is attached at N54. Residues G75, E94, A95, R102, M122, and R123 each contribute to the FAD site. L-glutamate is bound at residue R123. An L-glutamine-binding site is contributed by R123. R123 lines the L-lysine pocket. R123 is an L-phenylalanine binding site. Residues N164, N193, and N331 are each glycosylated (N-linked (GlcNAc...) asparagine). V334 contributes to the FAD binding site. Y457 serves as a coordination point for L-glutamate. Y457 contributes to the L-glutamine binding site. Y457 provides a ligand contact to L-lysine. Residue Y457 coordinates L-phenylalanine. E551 is a binding site for FAD. A558 is an L-phenylalanine binding site. FAD is bound by residues W559 and V560.

This sequence belongs to the flavin monoamine oxidase family. FIG1 subfamily. Homodimer. Requires FAD as cofactor. Out of the 4 glycosylated residues, Asn-54 is hypermannosylated. The presence of a hypermannosylated N-glycan on Asn-54 leads to adoption of a more active conformation in the absence of acid activation.

The protein resides in the secreted. It catalyses the reaction an L-alpha-amino acid + O2 + H2O = a 2-oxocarboxylate + H2O2 + NH4(+). The enzyme catalyses L-lysine + O2 + H2O = 6-amino-2-oxohexanoate + H2O2 + NH4(+). The catalysed reaction is L-glutamate + O2 + H2O = H2O2 + 2-oxoglutarate + NH4(+). It carries out the reaction L-arginine + O2 + H2O = 5-guanidino-2-oxopentanoate + H2O2 + NH4(+). It catalyses the reaction L-leucine + O2 + H2O = 4-methyl-2-oxopentanoate + H2O2 + NH4(+). The enzyme catalyses L-asparagine + O2 + H2O = 2-oxosuccinamate + H2O2 + NH4(+). The catalysed reaction is L-histidine + O2 + H2O = 3-(imidazol-5-yl)pyruvate + H2O2 + NH4(+). It carries out the reaction L-isoleucine + O2 + H2O = (S)-3-methyl-2-oxopentanoate + H2O2 + NH4(+). It catalyses the reaction L-methionine + O2 + H2O = 4-methylsulfanyl-2-oxobutanoate + H2O2 + NH4(+). The enzyme catalyses L-phenylalanine + O2 + H2O = 3-phenylpyruvate + H2O2 + NH4(+). The catalysed reaction is L-tyrosine + O2 + H2O = 3-(4-hydroxyphenyl)pyruvate + H2O2 + NH4(+). It carries out the reaction L-glutamine + O2 + H2O = 2-oxoglutaramate + H2O2 + NH4(+). It catalyses the reaction L-alanine + O2 + H2O = pyruvate + H2O2 + NH4(+). LAAO4 is activated by exposure to acidic pH, the detergent sodium dodecyl sulfate, or freezing. Its function is as follows. Catalyzes the oxidative deamination of L-amino acids with molecular oxygen to the corresponding alpha-keto acids and ammonia. L-glutamine shows the highest relative activity but LAAO4 has a broad substrate specificity, including L-amino acids with big aromatic, acidic and basic side chains. Methyl esters of these L-amino acids are also accepted, ethyl esters are converted but with lower activity, whereas D-Amino acids are not converted. No reaction is detected for small polar amino acids such as L-cysteine or L-aspartate, and very little for small, branched hydrophobic amino acids like L-valine. The protein is L-amino-acid oxidase 4 of Hebeloma cylindrosporum.